A 125-amino-acid chain; its full sequence is Large ribosomal subunit protein bL21 (125 aa).

It belongs to the bacterial ribosomal protein bL21 family. Part of the 50S ribosomal subunit. Contacts protein L20.

In terms of biological role, this protein binds to 23S rRNA in the presence of protein L20. The protein is Large ribosomal subunit protein bL21 of Synechococcus sp. (strain CC9902).